Reading from the N-terminus, the 427-residue chain is cAMP-dependent protein kinase regulatory subunit (427 aa).

The segment at 38–184 (QFCSNFFIRK…RIKVSISNNF (147 aa)) is dimerization and phosphorylation. The disordered stretch occupies residues 96–145 (TTHMGHPNDHGALHDDDDDPLEDEDDEEFDKFSTEPLPSLPPTNYNRGRR). Residues 110-124 (DDDDDPLEDEDDEEF) are compositionally biased toward acidic residues. Serine 147 is subject to Phosphoserine. 3',5'-cyclic AMP contacts are provided by residues 185-300 (LFRN…FLSE), glutamate 250, arginine 259, 303-422 (LLKS…YHAV), glutamate 372, and arginine 381.

The protein belongs to the cAMP-dependent kinase regulatory chain family. Tetramer, composed of 2 regulatory (R) and 2 catalytic (C) subunits. In the presence of cAMP it dissociates into 2 active monomeric C subunits and an R dimer.

The chain is cAMP-dependent protein kinase regulatory subunit (pkar) from Mucor circinelloides f. lusitanicus (Mucor racemosus var. lusitanicus).